The primary structure comprises 152 residues: Endoribonuclease YbeY (152 aa).

Residues H116, H120, and H126 each coordinate Zn(2+).

This sequence belongs to the endoribonuclease YbeY family. It depends on Zn(2+) as a cofactor.

The protein resides in the cytoplasm. In terms of biological role, single strand-specific metallo-endoribonuclease involved in late-stage 70S ribosome quality control and in maturation of the 3' terminus of the 16S rRNA. This Mycoplasma mobile (strain ATCC 43663 / 163K / NCTC 11711) (Mesomycoplasma mobile) protein is Endoribonuclease YbeY.